Reading from the N-terminus, the 198-residue chain is MSTPRTAEITRNTNETQIRVAINIDGTGQQKLNTGVPFLDHMLDQIARHGLIDLDIEAKGDLHIDAHHTVEDVGITLGQAFAKAIGDKKGIRRYGHSYVPLDEALSRVVIDFSGRPGLEFHVPFTRSMIGTFDVDLTHEFFQGFVNHALVSLHIDNLRGANAHHQCETVFKAFGRALRMAAELDPRSVGTIPSTKGSL.

It belongs to the imidazoleglycerol-phosphate dehydratase family.

It is found in the cytoplasm. It carries out the reaction D-erythro-1-(imidazol-4-yl)glycerol 3-phosphate = 3-(imidazol-4-yl)-2-oxopropyl phosphate + H2O. It functions in the pathway amino-acid biosynthesis; L-histidine biosynthesis; L-histidine from 5-phospho-alpha-D-ribose 1-diphosphate: step 6/9. The sequence is that of Imidazoleglycerol-phosphate dehydratase from Janthinobacterium sp. (strain Marseille) (Minibacterium massiliensis).